The following is a 335-amino-acid chain: Zinc finger protein CO3 (335 aa).

Positions 15, 18, 38, and 43 each coordinate Zn(2+). The segment at 15-57 adopts a B box-type; atypical zinc-finger fold; it reads CDSCRSAPCAFYCLADSAALCATCDADVHSVNPLARRHRRVPM. The segment at 141–179 is disordered; it reads AGEKEDASSSKDCSSSHGKSSEGSHEFAVPGEPVPERQG. The region spanning 268–310 is the CCT domain; that stretch reads REARVHRYREKRKTRRFEKTIRYASRKAYAETRPRIKGRFAKR.

The protein belongs to the CONSTANS family.

It is found in the nucleus. Functionally, probable transcription factor involved in the regulation of flowering time under short day (SD) conditions. Functions as a repressor of flowering under SD conditions, independently of HD1, EHD1, MADS50 and MADS51. Controls flowering time under SD conditions by negatively regulating the expression of HD3A and FTL. The protein is Zinc finger protein CO3 of Oryza sativa subsp. japonica (Rice).